The following is a 251-amino-acid chain: Ubiquinone/menaquinone biosynthesis C-methyltransferase UbiE (251 aa).

Residues threonine 74, aspartate 95, 123–124 (NA), and serine 140 each bind S-adenosyl-L-methionine.

It belongs to the class I-like SAM-binding methyltransferase superfamily. MenG/UbiE family.

The catalysed reaction is a 2-demethylmenaquinol + S-adenosyl-L-methionine = a menaquinol + S-adenosyl-L-homocysteine + H(+). It carries out the reaction a 2-methoxy-6-(all-trans-polyprenyl)benzene-1,4-diol + S-adenosyl-L-methionine = a 5-methoxy-2-methyl-3-(all-trans-polyprenyl)benzene-1,4-diol + S-adenosyl-L-homocysteine + H(+). The protein operates within quinol/quinone metabolism; menaquinone biosynthesis; menaquinol from 1,4-dihydroxy-2-naphthoate: step 2/2. It functions in the pathway cofactor biosynthesis; ubiquinone biosynthesis. Functionally, methyltransferase required for the conversion of demethylmenaquinol (DMKH2) to menaquinol (MKH2) and the conversion of 2-polyprenyl-6-methoxy-1,4-benzoquinol (DDMQH2) to 2-polyprenyl-3-methyl-6-methoxy-1,4-benzoquinol (DMQH2). This is Ubiquinone/menaquinone biosynthesis C-methyltransferase UbiE from Photorhabdus laumondii subsp. laumondii (strain DSM 15139 / CIP 105565 / TT01) (Photorhabdus luminescens subsp. laumondii).